The sequence spans 693 residues: C6 finger domain transcription factor nscR (693 aa).

A DNA-binding region (zn(2)-C6 fungal-type) is located at residues Cys-17–Cys-43. A disordered region spans residues Ala-589–Ser-608.

The protein resides in the nucleus. Its function is as follows. Transcription factor that specifically regulates the neosartoricin B biosynthesis gene cluster. This Trichophyton rubrum (strain ATCC MYA-4607 / CBS 118892) (Athlete's foot fungus) protein is C6 finger domain transcription factor nscR.